The sequence spans 131 residues: Metalloproteinase inhibitor (131 aa).

Residues 1–29 (MVRKRALGLAGSALTLVLGAVGFTAPAQA) form the signal peptide. Cystine bridges form between C33–C39 and C93–C98.

Functionally, inhibits microbial metallo-proteinases, such as thermolysin, but not serine, thiol, or carboxyl proteinases. This is Metalloproteinase inhibitor (smpI) from Streptomyces nigrescens.